The following is a 494-amino-acid chain: UPF0371 protein STER_1332 (494 aa).

The protein belongs to the UPF0371 family.

The polypeptide is UPF0371 protein STER_1332 (Streptococcus thermophilus (strain ATCC BAA-491 / LMD-9)).